We begin with the raw amino-acid sequence, 257 residues long: 3-deoxy-manno-octulosonate cytidylyltransferase (257 aa).

The protein belongs to the KdsB family.

The protein localises to the cytoplasm. It catalyses the reaction 3-deoxy-alpha-D-manno-oct-2-ulosonate + CTP = CMP-3-deoxy-beta-D-manno-octulosonate + diphosphate. It functions in the pathway nucleotide-sugar biosynthesis; CMP-3-deoxy-D-manno-octulosonate biosynthesis; CMP-3-deoxy-D-manno-octulosonate from 3-deoxy-D-manno-octulosonate and CTP: step 1/1. It participates in bacterial outer membrane biogenesis; lipopolysaccharide biosynthesis. Its function is as follows. Activates KDO (a required 8-carbon sugar) for incorporation into bacterial lipopolysaccharide in Gram-negative bacteria. In Stenotrophomonas maltophilia (strain R551-3), this protein is 3-deoxy-manno-octulosonate cytidylyltransferase.